Reading from the N-terminus, the 303-residue chain is tRNA-cytidine(32) 2-sulfurtransferase (303 aa).

Residues 45-50 (SGGKDS) carry the PP-loop motif motif. The [4Fe-4S] cluster site is built by Cys-120, Cys-123, and Cys-211.

Belongs to the TtcA family. Homodimer. Requires Mg(2+) as cofactor. [4Fe-4S] cluster is required as a cofactor.

The protein localises to the cytoplasm. The catalysed reaction is cytidine(32) in tRNA + S-sulfanyl-L-cysteinyl-[cysteine desulfurase] + AH2 + ATP = 2-thiocytidine(32) in tRNA + L-cysteinyl-[cysteine desulfurase] + A + AMP + diphosphate + H(+). The protein operates within tRNA modification. In terms of biological role, catalyzes the ATP-dependent 2-thiolation of cytidine in position 32 of tRNA, to form 2-thiocytidine (s(2)C32). The sulfur atoms are provided by the cysteine/cysteine desulfurase (IscS) system. In Methylobacillus flagellatus (strain ATCC 51484 / DSM 6875 / VKM B-1610 / KT), this protein is tRNA-cytidine(32) 2-sulfurtransferase.